The chain runs to 567 residues: Urease subunit alpha (567 aa).

Residues 128–567 form the Urease domain; that stretch reads GGIDPHIHFI…LPLAQLYHLF (440 aa). 3 residues coordinate Ni(2+): His133, His135, and Lys216. Lys216 is subject to N6-carboxylysine. His218 contacts substrate. Residues His245 and His271 each contribute to the Ni(2+) site. His319 (proton donor) is an active-site residue. Ni(2+) is bound at residue Asp359.

This sequence belongs to the metallo-dependent hydrolases superfamily. Urease alpha subunit family. Heterotrimer of UreA (gamma), UreB (beta) and UreC (alpha) subunits. Three heterotrimers associate to form the active enzyme. Ni cation is required as a cofactor. Carboxylation allows a single lysine to coordinate two nickel ions.

The protein resides in the cytoplasm. The enzyme catalyses urea + 2 H2O + H(+) = hydrogencarbonate + 2 NH4(+). It functions in the pathway nitrogen metabolism; urea degradation; CO(2) and NH(3) from urea (urease route): step 1/1. The chain is Urease subunit alpha from Marinobacter nauticus (strain ATCC 700491 / DSM 11845 / VT8) (Marinobacter aquaeolei).